A 282-amino-acid polypeptide reads, in one-letter code: Small-conductance mechanosensitive channel (282 aa).

Topologically, residues 1 to 23 (MWADIYHKLVEIYDIKAVKFLLD) are periplasmic. The chain crosses the membrane as a helical span at residues 24 to 46 (VLKILIIAFIGIKFADFLIYRFY). The Cytoplasmic portion of the chain corresponds to 47 to 66 (KLYSKSKIQLPQRKIDTLTS). A helical transmembrane segment spans residues 67–87 (LTKNAVRYIIYFLAGASILKL). Over 88–89 (FN) the chain is Periplasmic. A helical transmembrane segment spans residues 90-110 (IDMTSLLAVAGIGSLAIGFGA). Residues 111–282 (QNLVKDMISG…TVILSEKKTN (172 aa)) lie on the Cytoplasmic side of the membrane.

This sequence belongs to the MscS (TC 1.A.23) family. As to quaternary structure, homoheptamer.

It is found in the cell inner membrane. Its function is as follows. Mechanosensitive ion channel that participates in the regulation of osmotic pressure changes within the cell, opening in response to stretch forces in the membrane lipid bilayer, without the need for other proteins. Has high selectivity for anions, and may contribute to resistance to hypoosmotic shock. The sequence is that of Small-conductance mechanosensitive channel from Caldanaerobacter subterraneus subsp. tengcongensis (strain DSM 15242 / JCM 11007 / NBRC 100824 / MB4) (Thermoanaerobacter tengcongensis).